A 312-amino-acid chain; its full sequence is MTQPLRIIFAGTPDFSVPPLKTLIDSEHEVVAVYTQPDRPAGRGRKLTASPVKQTALEHDIPVYQPVSLKTPEAQAELEALQADVMIVVAYGLILPKAVLDMPKYGCLNIHASILPRWRGAAPIQRAIQMGDAETGVTIMQMDVGLDTGDMLTILKTPIKPEDTAQTLHDRLSALGCDAMMTTLSNLQTDQLSPVKQDERQVTYAEKLNKAEAELDWQASAQTLARQVQAFNPWPVAFTQYQGQPLRIWQAEVGHASTQKSPGLVISVSKTGMEVATGKGSLLIKQVQPSGKKAMPAYDFAQARQLTGQTLG.

(6S)-5,6,7,8-tetrahydrofolate is bound at residue 113–116; the sequence is SILP.

The protein belongs to the Fmt family.

It catalyses the reaction L-methionyl-tRNA(fMet) + (6R)-10-formyltetrahydrofolate = N-formyl-L-methionyl-tRNA(fMet) + (6S)-5,6,7,8-tetrahydrofolate + H(+). Its function is as follows. Attaches a formyl group to the free amino group of methionyl-tRNA(fMet). The formyl group appears to play a dual role in the initiator identity of N-formylmethionyl-tRNA by promoting its recognition by IF2 and preventing the misappropriation of this tRNA by the elongation apparatus. This Hydrogenovibrio crunogenus (strain DSM 25203 / XCL-2) (Thiomicrospira crunogena) protein is Methionyl-tRNA formyltransferase.